A 492-amino-acid polypeptide reads, in one-letter code: MRLATAANEAYTAPLAVSELLGCKQCGGGRDHDEELGIRIPRPLGQGPSRFIPEKEILQVGSEDAQMHALFADSFAALGRLDNITLVMVFHPQYLESFLKTQHYLLQMDGPLPLHYRHYIGIMAAARHQCSYLVNLHVNDFLHVGGDPKWLNGLENAPQKLQNLGELNKVLAHRPWLITKEHIEGLLKAEEHSWSLAELVHAVVLLTHYHSLASFTFGCGISPEIHCDGGHTFRPPSVSNYCICDITNGNHSVDEMPVNSAENVSVSDSFFEVEALMEKMRQLQECRDEEEASQEEMASRFEIEKRESMFVFSSDDDEVTPARDVSRHFEDTSYGYKDFSRHGMHVPTFRVQDYCWEDHGYSLVNRLYPDVGQLIDEKFHIAYNLTYNTMAMHKDVDTSMLRRAIWNYIHCMFGIRYDDYDYGEINQLLDRSFKVYIKTVVCTPEKVTKRMYESFWRQFKHSEKVHVNLLLIEARMQAELLYALRAITRYMT.

Residues 71–252 (FADSFAALGR…ICDITNGNHS (182 aa)) are N-terminal domain; may mediate the alkylhydroperoxide reductase activity. The active-site Cysteine sulfenic acid (-SOH) intermediate is cysteine 130. Serine 293 and serine 314 each carry phosphoserine. Residues 321 to 492 (PARDVSRHFE…ALRAITRYMT (172 aa)) are C-terminal domain; mediates TORC1 regulation. Residues 386-389 (TYNT), threonine 398, and glutamate 463 contribute to the L-leucine site.

This sequence belongs to the sestrin family. In terms of assembly, interacts with the GATOR2 complex which is composed of MIOS, SEC13, SEH1L, WDR24 and WDR59; the interaction is negatively regulated by leucine. Interacts with RRAGA, RRAGB, RRAGC and RRAGD; may function as a guanine nucleotide dissociation inhibitor for RRAGs and regulate them. Interacts with KEAP1, RBX1 and SQSTM1; in the SQSTM1-dependent autophagic degradation of KEAP1. May interact with PRDX1.

The protein localises to the nucleus. It is found in the cytoplasm. The enzyme catalyses a hydroperoxide + L-cysteinyl-[protein] = S-hydroxy-L-cysteinyl-[protein] + an alcohol. Its function is as follows. Functions as an intracellular leucine sensor that negatively regulates the TORC1 signaling pathway through the GATOR complex. In absence of leucine, binds the GATOR subcomplex GATOR2 and prevents TORC1 signaling. Binding of leucine to SESN2 disrupts its interaction with GATOR2 thereby activating the TORC1 signaling pathway. This stress-inducible metabolic regulator may also play a role in protection against oxidative and genotoxic stresses. May positively regulate the transcription by NFE2L2 of genes involved in the response to oxidative stress by facilitating the SQSTM1-mediated autophagic degradation of KEAP1. Moreover, may prevent the accumulation of reactive oxygen species (ROS) through the alkylhydroperoxide reductase activity born by the N-terminal domain of the protein. Was originally reported to contribute to oxidative stress resistance by reducing PRDX1. However, this could not be confirmed. In Macaca fascicularis (Crab-eating macaque), this protein is Sestrin-1.